An 871-amino-acid chain; its full sequence is Ubiquitin carboxyl-terminal hydrolase 8 (871 aa).

Residues 4-99 (TSPDESPDST…GETGEASVSG (96 aa)) enclose the DUSP domain. The USP domain maps to 279–869 (TGLQNLGNTC…AAYVLFYKRL (591 aa)). Cys288 functions as the Nucleophile in the catalytic mechanism. The disordered stretch occupies residues 615–650 (ENLENPTEEEATDKTDTDGTTSVEDTNSTDVKETTE). The Proton acceptor role is filled by His828.

It belongs to the peptidase C19 family.

The enzyme catalyses Thiol-dependent hydrolysis of ester, thioester, amide, peptide and isopeptide bonds formed by the C-terminal Gly of ubiquitin (a 76-residue protein attached to proteins as an intracellular targeting signal).. Functionally, recognizes and hydrolyzes the peptide bond at the C-terminal Gly of ubiquitin. Involved in the processing of poly-ubiquitin precursors as well as that of ubiquitinated proteins. The chain is Ubiquitin carboxyl-terminal hydrolase 8 (UBP8) from Arabidopsis thaliana (Mouse-ear cress).